The following is a 319-amino-acid chain: ATP-dependent 6-phosphofructokinase (319 aa).

Glycine 11 contributes to the ATP binding site. 21–25 is a binding site for ADP; the sequence is RAVVR. ATP contacts are provided by residues 72–73 and 102–105; these read RC and GDGS. Mg(2+) is bound at residue aspartate 103. 125–127 is a binding site for substrate; it reads TID. The active-site Proton acceptor is the aspartate 127. Residue arginine 154 coordinates ADP. Substrate contacts are provided by residues arginine 162 and 169–171; that span reads MGR. Residues 185–187, arginine 211, and 213–215 each bind ADP; these read GAE and KKH. Substrate contacts are provided by residues glutamate 222, arginine 243, and 249-252; that span reads HVQR.

It belongs to the phosphofructokinase type A (PFKA) family. ATP-dependent PFK group I subfamily. Prokaryotic clade 'B1' sub-subfamily. As to quaternary structure, homotetramer. Mg(2+) is required as a cofactor.

Its subcellular location is the cytoplasm. It carries out the reaction beta-D-fructose 6-phosphate + ATP = beta-D-fructose 1,6-bisphosphate + ADP + H(+). The protein operates within carbohydrate degradation; glycolysis; D-glyceraldehyde 3-phosphate and glycerone phosphate from D-glucose: step 3/4. With respect to regulation, allosterically activated by ADP and other diphosphonucleosides, and allosterically inhibited by phosphoenolpyruvate. Catalyzes the phosphorylation of D-fructose 6-phosphate to fructose 1,6-bisphosphate by ATP, the first committing step of glycolysis. This is ATP-dependent 6-phosphofructokinase from Bacillus cereus (strain B4264).